Consider the following 828-residue polypeptide: Periplasmic nitrate reductase (828 aa).

A signal peptide (tat-type signal) is located at residues 1 to 31 (MKLSRRSFMKANAVAAAAAAAGLSVPGVARA). Residues 39–95 (IKWDKAPCRFCGTGCGVLVGTQQGRVVACQGDPDAPVNRGLNCIKGYFLPKIMYGKD) form the 4Fe-4S Mo/W bis-MGD-type domain. [4Fe-4S] cluster contacts are provided by Cys46, Cys49, Cys53, and Cys81. Residues Lys83, Gln150, Asn175, Cys179, 212–219 (WGSNMAEM), 243–247 (STFQH), 262–264 (QSD), Met372, Gln376, Asn482, 508–509 (SD), Lys531, Asp558, and 718–727 (TGRVLEHWHT) contribute to the Mo-bis(molybdopterin guanine dinucleotide) site. Position 794 (Phe794) interacts with substrate. The Mo-bis(molybdopterin guanine dinucleotide) site is built by Asn802 and Lys819.

Belongs to the prokaryotic molybdopterin-containing oxidoreductase family. NasA/NapA/NarB subfamily. In terms of assembly, component of the periplasmic nitrate reductase NapAB complex composed of NapA and NapB. [4Fe-4S] cluster serves as cofactor. It depends on Mo-bis(molybdopterin guanine dinucleotide) as a cofactor. Predicted to be exported by the Tat system. The position of the signal peptide cleavage has not been experimentally proven.

It localises to the periplasm. The enzyme catalyses 2 Fe(II)-[cytochrome] + nitrate + 2 H(+) = 2 Fe(III)-[cytochrome] + nitrite + H2O. Catalytic subunit of the periplasmic nitrate reductase complex NapAB. Receives electrons from NapB and catalyzes the reduction of nitrate to nitrite. This Salmonella agona (strain SL483) protein is Periplasmic nitrate reductase.